Here is a 319-residue protein sequence, read N- to C-terminus: uncharacterized protein (319 aa).

One can recognise an SIS domain in the interval 36-178; the sequence is IIEFLLSFKG…MTVIHEERGF (143 aa). Position 51 to 56 (51 to 56) interacts with ATP; sequence GIGKSG. CBS domains are found at residues 203–263 and 268–319; these read MRSG…HLKT and MTKN…MGVS.

Belongs to the SIS family. GutQ/KpsF subfamily.

This is an uncharacterized protein from Rickettsia prowazekii (strain Madrid E).